A 546-amino-acid polypeptide reads, in one-letter code: Methionine--tRNA ligase (546 aa).

Positions 15–25 (PYANGPIHLGH) match the 'HIGH' region motif. Zn(2+) contacts are provided by cysteine 146, cysteine 149, cysteine 159, and cysteine 162. The 'KMSKS' region signature appears at 332–336 (KMSKS). Lysine 335 lines the ATP pocket.

This sequence belongs to the class-I aminoacyl-tRNA synthetase family. MetG type 1 subfamily. In terms of assembly, monomer. Zn(2+) serves as cofactor.

It localises to the cytoplasm. It catalyses the reaction tRNA(Met) + L-methionine + ATP = L-methionyl-tRNA(Met) + AMP + diphosphate. Its function is as follows. Is required not only for elongation of protein synthesis but also for the initiation of all mRNA translation through initiator tRNA(fMet) aminoacylation. This is Methionine--tRNA ligase from Coxiella burnetii (strain RSA 331 / Henzerling II).